The sequence spans 432 residues: PC-esterase domain-containing protein 1B (432 aa).

Disordered regions lie at residues 273-312 and 407-432; these read WESS…SPGL and GPYM…SRPQ. The segment covering 285-294 has biased composition (polar residues); sequence QDNIGPQFAQ. The span at 296 to 312 shows a compositional bias: pro residues; the sequence is PPYPFPRPPPLLPSPGL.

The protein belongs to the PC-esterase family.

This Rattus norvegicus (Rat) protein is PC-esterase domain-containing protein 1B (Pced1b).